Reading from the N-terminus, the 366-residue chain is tRNA-specific 2-thiouridylase MnmA (366 aa).

ATP-binding positions include 6–13 (AMSGGVDS) and L32. Residue C101 is the Nucleophile of the active site. C101 and C199 are joined by a disulfide. Position 125 (G125) interacts with ATP. Residues 149 to 151 (KDQ) are interaction with tRNA. The Cysteine persulfide intermediate role is filled by C199.

It belongs to the MnmA/TRMU family.

It is found in the cytoplasm. The enzyme catalyses S-sulfanyl-L-cysteinyl-[protein] + uridine(34) in tRNA + AH2 + ATP = 2-thiouridine(34) in tRNA + L-cysteinyl-[protein] + A + AMP + diphosphate + H(+). Catalyzes the 2-thiolation of uridine at the wobble position (U34) of tRNA, leading to the formation of s(2)U34. The chain is tRNA-specific 2-thiouridylase MnmA from Corynebacterium diphtheriae (strain ATCC 700971 / NCTC 13129 / Biotype gravis).